The following is a 455-amino-acid chain: J protein JJJ2 (455 aa).

The J domain occupies 12–76 (TYYSILGVPT…QLRAEYDKKL (65 aa)). Positions 104–241 (RNSKPYEQQP…RKKSEKKATP (138 aa)) are disordered. The segment covering 133–144 (NSNPHNENSSNN) has biased composition (low complexity). Basic and acidic residues predominate over residues 156–168 (TLSKDSEDKHGTD).

It is found in the cytoplasm. Its subcellular location is the nucleus. The chain is J protein JJJ2 (JJJ2) from Candida glabrata (strain ATCC 2001 / BCRC 20586 / JCM 3761 / NBRC 0622 / NRRL Y-65 / CBS 138) (Yeast).